Here is a 395-residue protein sequence, read N- to C-terminus: Elongation factor Tu (395 aa).

The 195-residue stretch at 10–204 folds into the tr-type G domain; the sequence is KPHVNIGTIG…TVDSYIPEPA (195 aa). Residues 19–26 are G1; that stretch reads GHVDHGKT. 19–26 serves as a coordination point for GTP; it reads GHVDHGKT. Position 26 (threonine 26) interacts with Mg(2+). Residues 60–64 form a G2 region; sequence GITIN. Residues 81 to 84 form a G3 region; that stretch reads DAPG. GTP-binding positions include 81–85 and 136–139; these read DAPGH and NKTD. The interval 136–139 is G4; that stretch reads NKTD. Positions 174–176 are G5; that stretch reads SAL.

The protein belongs to the TRAFAC class translation factor GTPase superfamily. Classic translation factor GTPase family. EF-Tu/EF-1A subfamily. Monomer.

It localises to the cytoplasm. It catalyses the reaction GTP + H2O = GDP + phosphate + H(+). In terms of biological role, GTP hydrolase that promotes the GTP-dependent binding of aminoacyl-tRNA to the A-site of ribosomes during protein biosynthesis. The protein is Elongation factor Tu of Leuconostoc mesenteroides subsp. mesenteroides (strain ATCC 8293 / DSM 20343 / BCRC 11652 / CCM 1803 / JCM 6124 / NCDO 523 / NBRC 100496 / NCIMB 8023 / NCTC 12954 / NRRL B-1118 / 37Y).